Here is a 320-residue protein sequence, read N- to C-terminus: Malate dehydrogenase (320 aa).

NAD(+)-binding positions include 10–15 (GSGMIG) and Asp-34. Substrate contacts are provided by Arg-83 and Arg-89. NAD(+)-binding positions include Asn-96 and 119–121 (ITN). Residues Asn-121 and Arg-152 each coordinate substrate. The Proton acceptor role is filled by His-176.

The protein belongs to the LDH/MDH superfamily. MDH type 3 family.

It carries out the reaction (S)-malate + NAD(+) = oxaloacetate + NADH + H(+). Its function is as follows. Catalyzes the reversible oxidation of malate to oxaloacetate. The protein is Malate dehydrogenase of Brucella anthropi (strain ATCC 49188 / DSM 6882 / CCUG 24695 / JCM 21032 / LMG 3331 / NBRC 15819 / NCTC 12168 / Alc 37) (Ochrobactrum anthropi).